Here is a 94-residue protein sequence, read N- to C-terminus: Large ribosomal subunit protein eL31 (94 aa).

The protein belongs to the eukaryotic ribosomal protein eL31 family.

The chain is Large ribosomal subunit protein eL31 (rpl31e) from Pyrococcus abyssi (strain GE5 / Orsay).